We begin with the raw amino-acid sequence, 515 residues long: NAD(P)H-quinone oxidoreductase subunit 2 (515 aa).

A run of 14 helical transmembrane segments spans residues 14 to 34, 42 to 62, 79 to 99, 109 to 128, 132 to 151, 167 to 187, 206 to 226, 240 to 260, 274 to 294, 302 to 322, 330 to 350, 374 to 394, 396 to 416, and 462 to 482; these read TILPETILIVTLLVVLLADLI, WTPYFAIVGLGGAIATMIPLW, LSLFFRGLIALSALGTILMSI, LGEFMTILLTATVGGMFIAG, LVFIFVALETLSIASYLLTG, LLIGAASSAIFLYGSSLLYGL, LGLVVALVFVIAGISFKISAV, PTPVVAFLSVGSKAAGFALAI, WQLIFTVLAILSMILGNVVAL, MLAYSSIGQAGFVMIGFVVGT, LFYLLVYLFMNLGAFTCVILF, LGLSLCLLSLGGIPPLAGFFG, IYLFWAGWQAGAYGLVLLGLL, and VGLVMTVIATSLAGILANPLF.

The protein belongs to the complex I subunit 2 family. As to quaternary structure, NDH-1 can be composed of about 15 different subunits; different subcomplexes with different compositions have been identified which probably have different functions.

Its subcellular location is the cellular thylakoid membrane. The enzyme catalyses a plastoquinone + NADH + (n+1) H(+)(in) = a plastoquinol + NAD(+) + n H(+)(out). It carries out the reaction a plastoquinone + NADPH + (n+1) H(+)(in) = a plastoquinol + NADP(+) + n H(+)(out). Its function is as follows. NDH-1 shuttles electrons from an unknown electron donor, via FMN and iron-sulfur (Fe-S) centers, to quinones in the respiratory and/or the photosynthetic chain. The immediate electron acceptor for the enzyme in this species is believed to be plastoquinone. Couples the redox reaction to proton translocation, and thus conserves the redox energy in a proton gradient. Cyanobacterial NDH-1 also plays a role in inorganic carbon-concentration. The protein is NAD(P)H-quinone oxidoreductase subunit 2 of Thermosynechococcus vestitus (strain NIES-2133 / IAM M-273 / BP-1).